Reading from the N-terminus, the 1047-residue chain is Atrial natriuretic peptide receptor 2 (1047 aa).

Positions 1–16 are cleaved as a signal peptide; that stretch reads MALPSLLLVVAALAGG. Over 17 to 458 the chain is Extracellular; sequence VRPPGARNLT…DKTPLSTLAI (442 aa). Residues asparagine 24 and asparagine 35 are each glycosylated (N-linked (GlcNAc...) asparagine). A disulfide bridge connects residues cysteine 75 and cysteine 101. Asparagine 161, asparagine 195, asparagine 244, asparagine 277, and asparagine 349 each carry an N-linked (GlcNAc...) asparagine glycan. Residues 459 to 478 form a helical membrane-spanning segment; it reads VALGTGITFIMFGVSSFLIF. Over 479-1047 the chain is Cytoplasmic; the sequence is RKLMLEKELA…GERKGPPGLL (569 aa). Residue serine 513 is modified to Phosphoserine. In terms of domain architecture, Protein kinase spans 513 to 786; it reads SRLTLSLRGS…PDFGQIKGFI (274 aa). A Phosphothreonine modification is found at threonine 516. Serine 518, serine 522, serine 523, and serine 526 each carry phosphoserine. Threonine 529 carries the post-translational modification Phosphothreonine. One can recognise a Guanylate cyclase domain in the interval 861–991; it reads TIYFSDIVGF…DTVNTASRME (131 aa).

Belongs to the adenylyl cyclase class-4/guanylyl cyclase family. In terms of processing, phosphorylated. Phosphorylation of the protein kinase-like domain is required for full activation by CNP. Glycosylated.

It is found in the cell membrane. The enzyme catalyses GTP = 3',5'-cyclic GMP + diphosphate. Its function is as follows. Receptor for the C-type natriuretic peptide NPPC/CNP hormone. Has guanylate cyclase activity upon binding of its ligand. May play a role in the regulation of skeletal growth. The chain is Atrial natriuretic peptide receptor 2 (Npr2) from Rattus norvegicus (Rat).